A 595-amino-acid polypeptide reads, in one-letter code: uncharacterized protein (595 aa).

The interval 112-180 (VRPPGYDPES…KDVFGRALPT (69 aa)) is disordered. 2 stretches are compositionally biased toward basic and acidic residues: residues 120 to 133 (ESAK…EKHK) and 161 to 174 (RTQE…KDVF). The segment at 211–228 (VKCLRCGNFGHQSGDRDC) adopts a CCHC-type; degenerate zinc-finger fold. Disordered stretches follow at residues 254–290 (HTDP…IVAE) and 310–595 (KSMS…RRRN). The segment covering 256–267 (DPSEPLKWELKQ) has biased composition (basic and acidic residues). 2 stretches are compositionally biased toward basic residues: residues 316–331 (KKRK…KHSS) and 351–364 (RGSK…KKSK). Composition is skewed to basic and acidic residues over residues 414–428 (HYYD…EIVD), 470–539 (VSEK…HVYE), and 547–565 (FSDR…ESNR). A compositionally biased stretch (basic residues) spans 584–595 (RKHRYSTNRRRN).

This is an uncharacterized protein from Arabidopsis thaliana (Mouse-ear cress).